Reading from the N-terminus, the 440-residue chain is Ribulose bisphosphate carboxylase large chain (440 aa).

Position 4 is an N6,N6,N6-trimethyllysine (lysine 4). Substrate contacts are provided by asparagine 113 and threonine 163. The Proton acceptor role is filled by lysine 165. Lysine 167 serves as a coordination point for substrate. Mg(2+)-binding residues include lysine 191, aspartate 193, and glutamate 194. Lysine 191 carries the post-translational modification N6-carboxylysine. Histidine 284 serves as the catalytic Proton acceptor. 3 residues coordinate substrate: arginine 285, histidine 317, and serine 369.

The protein belongs to the RuBisCO large chain family. Type I subfamily. Heterohexadecamer of 8 large chains and 8 small chains; disulfide-linked. The disulfide link is formed within the large subunit homodimers. Requires Mg(2+) as cofactor. In terms of processing, the disulfide bond which can form in the large chain dimeric partners within the hexadecamer appears to be associated with oxidative stress and protein turnover.

It localises to the plastid. Its subcellular location is the chloroplast. It catalyses the reaction 2 (2R)-3-phosphoglycerate + 2 H(+) = D-ribulose 1,5-bisphosphate + CO2 + H2O. The catalysed reaction is D-ribulose 1,5-bisphosphate + O2 = 2-phosphoglycolate + (2R)-3-phosphoglycerate + 2 H(+). RuBisCO catalyzes two reactions: the carboxylation of D-ribulose 1,5-bisphosphate, the primary event in carbon dioxide fixation, as well as the oxidative fragmentation of the pentose substrate in the photorespiration process. Both reactions occur simultaneously and in competition at the same active site. This chain is Ribulose bisphosphate carboxylase large chain, found in Onoclea sensibilis (Sensitive fern).